A 550-amino-acid chain; its full sequence is Metal transporter Nramp3 (550 aa).

Positions 1 to 26 (MSGPMQRSSQPQFISSVERNNQSNGP) are enriched in polar residues. The interval 1–30 (MSGPMQRSSQPQFISSVERNNQSNGPGTPL) is disordered. Transmembrane regions (helical) follow at residues 50–70 (LFSYIGPGFLVSIAYIDPGNF), 83–103 (ELLWIILIASCAALIIQSLAA), 127–147 (FILWILAELAVVACDIPEVIG), 158–178 (IPVWCGVLITGLSTLMLLLLQ), 185–205 (LEFLIAILVSLIATCFLVELG), 233–253 (ISLLGAMVMPHNLFLHSALVL), 276–296 (AFALTIAFLINISIISVSGAV), 333–353 (LFAVALLASGQSSTITGTYAG), 368–390 (WIRNLLTRSLAILPSLIVSIIGG), 397–417 (LIIIASMILSFELPFALVPLL), 435–455 (ISVITWGIGSFIVVINTYFLI), and 473–493 (VFSGIFGFLGMLIYMAAILYL). Residues 523–550 (GEGSLGHLPREDISSMQLPQQRTASDLD) are disordered. The span at 536-550 (SSMQLPQQRTASDLD) shows a compositional bias: polar residues.

The protein belongs to the NRAMP (TC 2.A.55) family.

The protein localises to the membrane. Functionally, probable metal transporter. The sequence is that of Metal transporter Nramp3 (NRAMP3) from Oryza sativa subsp. japonica (Rice).